Here is a 546-residue protein sequence, read N- to C-terminus: MSYENLANLIFPNIDKTPEYYFEKYPKRDLKEGAKVLRYAPSPTGFQHIGGVFASLINERLAHQSGGIFYLRIEDTDQKREVEGAIDDTIKTMHNFGMDFDEGITGENSEKGAYAPYKQSQRADIYRAFVKDLLRKGLAYPCFMTSEELEALREKQIAEKLTPGCYGEFAKYRDLSPEEAIKRIEAGESYVIRMKSPGNPEKRVVAHDMIKGEVSFPENLQDVVIIKGDGLPTYHFAHAIDDTLMRTTHVIRGEEWLSSLPIHLQMFEVLGVEAPKYAHIPTIMKMDGSSKRKLSKRKDPESAVSYYSEKGYPSQSVIEYLLNIINSAFEEWRAENPDADYHDYKVELDKMSKSGALFDLVKLNDVSKDVICKMKPEVVYDLYTNWAKEYDKEMYDLVTSKEAMMKEVFNIDKEGPKPRKDFAKWDEVREKIFYFFDELFDKETANDVELPKTLELEEAKRIIEAYEKAYNFNTDKDTWFSDLKEVAVELGYATDRKKYKKNPEEYKGMVSDVAGAVRAALTHRANTPDLYTIMQIMGEEAVRERI.

The 'HIGH' region signature appears at 41 to 51 (PSPTGFQHIGG). The 'KMSKS' region motif lies at 293-297 (KLSKR). ATP is bound at residue Lys-296.

Belongs to the class-I aminoacyl-tRNA synthetase family. Glutamate--tRNA ligase type 1 subfamily. As to quaternary structure, monomer.

Its subcellular location is the cytoplasm. The enzyme catalyses tRNA(Glu) + L-glutamate + ATP = L-glutamyl-tRNA(Glu) + AMP + diphosphate. In terms of biological role, catalyzes the attachment of glutamate to tRNA(Glu) in a two-step reaction: glutamate is first activated by ATP to form Glu-AMP and then transferred to the acceptor end of tRNA(Glu). This is Glutamate--tRNA ligase from Clostridium perfringens (strain 13 / Type A).